The chain runs to 406 residues: S-adenosylmethionine synthase (406 aa).

An ATP-binding site is contributed by 140–145; that stretch reads GRGSVD.

It belongs to the AdoMet synthase 2 family. Mg(2+) serves as cofactor.

It carries out the reaction L-methionine + ATP + H2O = S-adenosyl-L-methionine + phosphate + diphosphate. The protein operates within amino-acid biosynthesis; S-adenosyl-L-methionine biosynthesis; S-adenosyl-L-methionine from L-methionine: step 1/1. Its function is as follows. Catalyzes the formation of S-adenosylmethionine from methionine and ATP. The protein is S-adenosylmethionine synthase (mat) of Aeropyrum pernix (strain ATCC 700893 / DSM 11879 / JCM 9820 / NBRC 100138 / K1).